The following is a 237-amino-acid chain: Phosphoribosylaminoimidazole-succinocarboxamide synthase (237 aa).

Belongs to the SAICAR synthetase family.

The catalysed reaction is 5-amino-1-(5-phospho-D-ribosyl)imidazole-4-carboxylate + L-aspartate + ATP = (2S)-2-[5-amino-1-(5-phospho-beta-D-ribosyl)imidazole-4-carboxamido]succinate + ADP + phosphate + 2 H(+). The protein operates within purine metabolism; IMP biosynthesis via de novo pathway; 5-amino-1-(5-phospho-D-ribosyl)imidazole-4-carboxamide from 5-amino-1-(5-phospho-D-ribosyl)imidazole-4-carboxylate: step 1/2. This chain is Phosphoribosylaminoimidazole-succinocarboxamide synthase, found in Methanosarcina acetivorans (strain ATCC 35395 / DSM 2834 / JCM 12185 / C2A).